The sequence spans 775 residues: Subtilisin-like protease SBT3.8 (775 aa).

The N-terminal stretch at 1–26 is a signal peptide; it reads MKSCRTLIFVAIILNGLSTFVAHAGA. The propeptide at 27–109 is activation peptide; it reads ESKVHIVYLG…VTPDSFYQLD (83 aa). The region spanning 30-108 is the Inhibitor I9 domain; sequence VHIVYLGEKQ…HVTPDSFYQL (79 aa). In terms of domain architecture, Peptidase S8 spans 113–622; sequence TWDYLGLSVA…GGLVNPEKAA (510 aa). A glycan (N-linked (GlcNAc...) asparagine) is linked at asparagine 129. Aspartate 143 serves as the catalytic Charge relay system. 2 N-linked (GlcNAc...) asparagine glycosylation sites follow: asparagine 174 and asparagine 202. The active-site Charge relay system is the histidine 218. The PA domain maps to 384–476; sequence SLVYPENPGN…VDYELGTDIL (93 aa). Residues asparagine 395, asparagine 410, and asparagine 538 are each glycosylated (N-linked (GlcNAc...) asparagine). Catalysis depends on serine 553, which acts as the Charge relay system. Residues asparagine 645, asparagine 721, and asparagine 756 are each glycosylated (N-linked (GlcNAc...) asparagine).

The protein belongs to the peptidase S8 family.

It is found in the secreted. In Arabidopsis thaliana (Mouse-ear cress), this protein is Subtilisin-like protease SBT3.8.